The chain runs to 603 residues: Matrix metalloproteinase-17 (603 aa).

The first 35 residues, 1-35 (MRRRAARGPGPPPPGPGLSRLPLPLLLLLALGTRG), serve as a signal peptide directing secretion. A propeptide spanning residues 36–125 (GCAAPAPAPR…PVLTQARRRR (90 aa)) is cleaved from the precursor. The Cysteine switch signature appears at 108–115 (PRCSLPDL). A Zn(2+)-binding site is contributed by Cys110. Residue Asn137 is glycosylated (N-linked (GlcNAc...) asparagine). His248 is a binding site for Zn(2+). The active site involves Glu249. The Zn(2+) site is built by His252 and His258. The interval 301 to 329 (SPTAQPEEPPLLPEPPDNRSSAPPRKDVP) is disordered. A glycan (N-linked (GlcNAc...) asparagine) is linked at Asn318. Cysteines 332 and 523 form a disulfide. 4 Hemopexin repeats span residues 333–378 (STHF…WRGL), 382–427 (LDSV…FSLP), 428–475 (PGGI…WRGV), and 476–523 (PSTL…WLVC). The disordered stretch occupies residues 537-571 (DAAEGPRAPPGQHDQSRSEDGYEVCSCTSGASSPP). A lipid anchor (GPI-anchor amidated serine) is attached at Ser565. Positions 566–603 (GASSPPGAPGPLVAATMLLLLPPLSPGALWTAAQALTL) are cleaved as a propeptide — removed in mature form.

It belongs to the peptidase M10A family. Zn(2+) is required as a cofactor. The cofactor is Ca(2+). Post-translationally, the precursor is cleaved by a furin endopeptidase. Expressed in brain, leukocytes, colon, ovary testis and breast cancer. Expressed also in many transformed and non-transformed cell types.

The protein resides in the cell membrane. It localises to the secreted. It is found in the extracellular space. Its subcellular location is the extracellular matrix. Its function is as follows. Endopeptidase that degrades various components of the extracellular matrix, such as fibrin. May be involved in the activation of membrane-bound precursors of growth factors or inflammatory mediators, such as tumor necrosis factor-alpha. May also be involved in tumoral process. Cleaves pro-TNF-alpha at the '74-Ala-|-Gln-75' site. Not obvious if able to proteolytically activate progelatinase A. Does not hydrolyze collagen types I, II, III, IV and V, gelatin, fibronectin, laminin, decorin nor alpha1-antitrypsin. The sequence is that of Matrix metalloproteinase-17 (MMP17) from Homo sapiens (Human).